Here is a 1233-residue protein sequence, read N- to C-terminus: Capping protein-inhibiting regulator of actin dynamics (1233 aa).

3 positions are modified to phosphoserine: Ser7, Ser28, and Ser132. Disordered regions lie at residues 92–136, 157–224, and 269–527; these read AENK…SAGT, AKHK…RRRQ, and LLEE…WQEV. Basic residues predominate over residues 157–176; it reads AKHKLAVKPKKQRVSKKHRR. Composition is skewed to basic and acidic residues over residues 200-211, 282-293, 302-322, and 329-362; these read PGEDKPTWHEEE, EAERAPREEQQR, DAER…ERRR, and AEER…KRQE. The required for interaction with actin-capping proteins stretch occupies residues 321-472; sequence RRLQAQAQAE…EQQGRSGDFQ (152 aa). Composition is skewed to acidic residues over residues 363–376 and 397–407; these read EEEA…EQQE and EEEDLGEEEEE. Ser420 is modified (phosphoserine). 2 stretches are compositionally biased toward basic and acidic residues: residues 432-447 and 505-527; these read DQER…HSEE and VERK…WQEV. Ser556 carries the post-translational modification Phosphoserine. Thr559 carries the post-translational modification Phosphothreonine. Disordered stretches follow at residues 560–586, 629–788, 815–1082, and 1097–1186; these read PAKD…HALP, HAEA…TTEG, EFTT…TEKV, and QKGF…ISDS. A compositionally biased stretch (basic and acidic residues) spans 677 to 707; it reads KNAESDPRSSERDQLRPGDESTPRGRCDSRG. Positions 732-742 are enriched in polar residues; the sequence is GTETSKQSTEA. Residues 768-783 are compositionally biased toward basic and acidic residues; the sequence is ELGKGPEKSEMHREPA. 2 stretches are compositionally biased toward polar residues: residues 815 to 825 and 852 to 863; these read EFTTSSDSETA and TNYSLRFNCDQQ. The segment covering 876 to 889 has biased composition (low complexity); the sequence is GDSADAGPPAAGSA. Positions 908–921 are enriched in basic and acidic residues; that stretch reads QERKQAPSTRRDSA. Over residues 956-967 the composition is skewed to low complexity; it reads PLAQKPALAPKP. Thr971 is subject to Phosphothreonine. Phosphoserine occurs at positions 975 and 1017. The segment covering 994–1040 has biased composition (basic and acidic residues); that stretch reads GRPDPEPSEPSKEDQESSDRRPPSPPGPEERKGQKRDEEEEATERKP. Residues 1047 to 1057 show a composition bias toward polar residues; it reads ATQQEKPSQTP. Composition is skewed to basic and acidic residues over residues 1059 to 1082 and 1099 to 1124; these read AGRK…TEKV and GFRE…KLSK. The segment covering 1127–1139 has biased composition (low complexity); that stretch reads VSVSVQPGSSSVS. Basic and acidic residues predominate over residues 1151-1170; that stretch reads PEEKRPETAVSRLERREQLK. A compositionally biased stretch (polar residues) spans 1174-1183; that stretch reads TLPTSVTVEI.

Directly interacts with actin-capping proteins CAPZA1, CAPZA2 and CAPZB; this interaction decreases the binding of capping proteins to actin. In terms of tissue distribution, expressed in intestinal epithelial cells (at protein level).

The protein localises to the cytoplasm. It localises to the cytosol. In terms of biological role, involved in epithelial cell integrity by acting on the maintenance of the actin cytoskeleton. Positively regulates the actin polymerization, by inhibiting the interaction of actin-capping proteins with actin. This Homo sapiens (Human) protein is Capping protein-inhibiting regulator of actin dynamics.